The primary structure comprises 274 residues: Beta-lactamase OXA-9 (274 aa).

Residues 1–24 form the signal peptide; it reads MKKILLLHMLVFVSATLPISSVAS. Residue S58 is the Acyl-ester intermediate of the active site. Residue K61 is modified to N6-carboxylysine. Residue 206 to 208 coordinates substrate; that stretch reads KSG.

The protein belongs to the class-D beta-lactamase family.

It carries out the reaction a beta-lactam + H2O = a substituted beta-amino acid. Its function is as follows. Oxacillin-hydrolyzing beta-lactamase. Confers resistance to beta-lactam antibiotics but at a significantly lower level than the TEM bla gene product. The protein is Beta-lactamase OXA-9 (bla) of Klebsiella aerogenes (Enterobacter aerogenes).